Consider the following 478-residue polypeptide: MSAQNYHAGLHQSSTQRPPKRPNTEHAQEPPKRALIGGQTTPSSSGGGQTPNGTNYELEVKQQLSNYQKLFDQATYPFIRDVSTYEKLNKIGQGTFGEVFKARCKNTGRMVALKKILMENEKEGFPITALREVKMLEQLKHPNITDLIEVCSAKSTGTTGSKDRATFYLVMALCAHDLAGLLSNPKIRMSLVHIKTMMKHLMSGLNKLHRSKILHRDMKAANVLISKDGILKLADFGLARPFVQRENGAGPRPLYTNRVVTLWYRPPELLLGDRQYGTKIDVWGAGCIMAEMWTRQPIMQGDTEQKQLQLISGLCGSINKDVWPNCVNMPLWSAMSSEPNSALPQGKYRILPNKMKNLMKFDAPDSKTDPFGKNVKQHDSATDDDALHLLEILLAIDPDKRPTSDEAEDDIWFFKDPVPMANVQDLMDTIPNSQFEYTVGKGAHANRGRHQNAQQRPNQQQARPSNAIPAGQYRDTIF.

Positions 1 to 17 (MSAQNYHAGLHQSSTQR) are enriched in polar residues. The interval 1-55 (MSAQNYHAGLHQSSTQRPPKRPNTEHAQEPPKRALIGGQTTPSSSGGGQTPNGTN) is disordered. The span at 22–32 (PNTEHAQEPPK) shows a compositional bias: basic and acidic residues. One can recognise a Protein kinase domain in the interval 85–413 (YEKLNKIGQG…SDEAEDDIWF (329 aa)). Residues 91–99 (IGQGTFGEV) and K114 each bind ATP. Catalysis depends on D217, which acts as the Proton acceptor. The interval 444–478 (HANRGRHQNAQQRPNQQQARPSNAIPAGQYRDTIF) is disordered. A compositionally biased stretch (low complexity) spans 451-464 (QNAQQRPNQQQARP).

Belongs to the protein kinase superfamily. CMGC Ser/Thr protein kinase family. CDC2/CDKX subfamily. In terms of assembly, associates with cyclin-T (cit-1.1 or cit-1.2) to form P-TEFb.

Its subcellular location is the nucleus. The enzyme catalyses L-seryl-[protein] + ATP = O-phospho-L-seryl-[protein] + ADP + H(+). It carries out the reaction L-threonyl-[protein] + ATP = O-phospho-L-threonyl-[protein] + ADP + H(+). The catalysed reaction is [DNA-directed RNA polymerase] + ATP = phospho-[DNA-directed RNA polymerase] + ADP + H(+). Functionally, essential member of the cyclin-dependent kinase pair (CDK9/cyclin-T) complex, also called positive transcription elongation factor B (P-TEFb), which is proposed to facilitate the transition from abortive to production elongation by phosphorylating the CTD (C-terminal domain) of the large subunit of RNA polymerase II (RNAP II) and spt-5. The polypeptide is Probable cyclin-dependent kinase 9 (cdk-9) (Caenorhabditis elegans).